We begin with the raw amino-acid sequence, 263 residues long: uncharacterized protein (263 aa).

31–38 (GPTGSGKT) provides a ligand contact to ATP.

This sequence belongs to the CbbQ/NirQ/NorQ/GpvN family.

This is an uncharacterized protein from Staphylococcus aureus (strain bovine RF122 / ET3-1).